The following is a 472-amino-acid chain: Guanine nucleotide-binding protein alpha-1 subunit (472 aa).

A lipid anchor (N-myristoyl glycine) is attached at G2. A lipid anchor (S-palmitoyl cysteine) is attached at C3. A G-alpha domain is found at 40-472 (NEIKLLLLGA…QQNLKKIGII (433 aa)). Residues 43-56 (KLLLLGAGESGKST) are G1 motif. GTP is bound by residues E51, S52, G53, K54, S55, and T56. S55 is a Mg(2+) binding site. Residues 127 to 235 (LDYINASVAG…REIQGQNRRN (109 aa)) are insert; not present in other G-proteins. The disordered stretch occupies residues 162 to 199 (GRAKAAFDEDGNISNVKSDTDRDAETVTQNEDADRNNS). K165 participates in a covalent cross-link: Glycyl lysine isopeptide (Lys-Gly) (interchain with G-Cter in ubiquitin). The segment at 292-300 (DILKGRIKT) is G2 motif. The GTP site is built by L294, T300, G322, N388, K389, D391, and A444. T300 provides a ligand contact to Mg(2+). Residues 315–324 (FKVLDAGGQR) are G3 motif. Positions 384–391 (ILFLNKID) are G4 motif. The segment at 442–447 (TCATDT) is G5 motif.

This sequence belongs to the G-alpha family. G(q) subfamily. As to quaternary structure, g proteins are composed of 3 units; alpha, beta and gamma. The alpha chain contains the guanine nucleotide binding site. In its GDP-bound form, binds to the G protein beta-gamma dimer STE4-STE18. Directly interacts with the beta subunit STE4. Probably forms preactivation complexes with unligated receptors STE2 and STE3. Interacts with FUS3. Pheromone-induced activation of GPA1 increases its association with FUS3. Interacts with SCP160. SCP160 binds specifically to the GTP-bound form of GPA1. Interacts with the phosphatidylinositol 3-kinase (PI3K) subunits VPS15 and VPS34 at the endosome. The GTP-bound form of GPA1 binds directly and selectively to the catalytic subunit VPS34, while the GDP-bound form binds to VPS15, which appears to function as an alternative G protein beta subunit for GPA1. Interacts with regulators of G protein signaling (RGS) proteins MDM1, RAX1, RGS2 and SST2, but SST2 alone binds preferentially to the transition state conformation of GPA1, indicating that it acts as a GAP for this G protein. It depends on Mg(2+) as a cofactor. In terms of processing, N-myristoylation by NMT1 is pheromone-stimulated and required for palmitoylation of Cys-3. This lipid modification anchors the protein to membranes. Depalmitoylated by YLR118C/APT1. Post-translationally, monoubiquitination targets the protein for degradation to the vacuole, and polyubiquitination tags the protein for degradation by the proteasome. This may be an additional signaling regulation mechanism.

The protein localises to the cell membrane. Its subcellular location is the endosome membrane. Its activity is regulated as follows. Alternates between an inactive form bound to GDP and an active form bound to GTP. Activated by the G protein coupled receptors (GPCRs) STE2 and STE3, which serve as guanine nucleotide-exchange factors (GEFs), and inactivated by SST2, probably acting as a GTPase-activating protein (GAP). Its function is as follows. Alpha subunit of the heterotrimeric guanine nucleotide-binding protein (G protein) that mediates mating pheromone signal transduction. Binding of alpha-factor or a-factor to its cognate transmembrane receptor STE2 and STE3, respectively, allows the receptor to serve as a guanine nucleotide exchange factor (GEF) on GPA1. The exchange of GDP for GTP on the G protein alpha subunit alters its interaction with the G protein beta subunit STE4, leading to dissociation of the G protein beta-gamma dimer STE4-STE18. The dissociated subunits activate downstream effectors to activate the mating response pathway and induce changes necessary to produce mating-competent cells. STE4-STE18 activate the downstream pheromone signaling MAP kinase cascade leading to expression of mating-specific genes, inducing cell cycle arrest in G1, promoting polarized cell growth to form mating projections (shmoos), and establishing the changes in plasma membrane, cell wall and nuclear envelope to permit cell-cell fusion (plasmogamy) and fusion of the two haploid nuclei (karyogamy). GPA1 transmits a signal that requires direct binding to the effector enzyme PI3K located at the endosome, promoting increased PI3 production. The intrinsic GTPase activity of GPA1 determines the duration of signaling, and is dramatically accelerated by the RGS protein SST2. In unstimulated cells, GDP-bound GPA1 sequesters the G protein beta-gamma subunit STE4-STE18, preventing it from activating the downstream effectors. Also down-regulates the signal by inhibiting the pheromone-induced accumulation of FUS3 in the nucleus. The polypeptide is Guanine nucleotide-binding protein alpha-1 subunit (GPA1) (Saccharomyces cerevisiae (strain ATCC 204508 / S288c) (Baker's yeast)).